Here is a 362-residue protein sequence, read N- to C-terminus: Probable dual-specificity RNA methyltransferase RlmN (362 aa).

Glu105 (proton acceptor) is an active-site residue. In terms of domain architecture, Radical SAM core spans His111–Asp344. The cysteines at positions 118 and 349 are disulfide-linked. Cys125, Cys129, and Cys132 together coordinate [4Fe-4S] cluster. S-adenosyl-L-methionine-binding positions include Gly175–Glu176, Ser207, Ser230–His232, and Asn306. Catalysis depends on Cys349, which acts as the S-methylcysteine intermediate.

This sequence belongs to the radical SAM superfamily. RlmN family. The cofactor is [4Fe-4S] cluster.

Its subcellular location is the cytoplasm. The enzyme catalyses adenosine(2503) in 23S rRNA + 2 reduced [2Fe-2S]-[ferredoxin] + 2 S-adenosyl-L-methionine = 2-methyladenosine(2503) in 23S rRNA + 5'-deoxyadenosine + L-methionine + 2 oxidized [2Fe-2S]-[ferredoxin] + S-adenosyl-L-homocysteine. It catalyses the reaction adenosine(37) in tRNA + 2 reduced [2Fe-2S]-[ferredoxin] + 2 S-adenosyl-L-methionine = 2-methyladenosine(37) in tRNA + 5'-deoxyadenosine + L-methionine + 2 oxidized [2Fe-2S]-[ferredoxin] + S-adenosyl-L-homocysteine. Functionally, specifically methylates position 2 of adenine 2503 in 23S rRNA and position 2 of adenine 37 in tRNAs. The sequence is that of Probable dual-specificity RNA methyltransferase RlmN from Bacillus cytotoxicus (strain DSM 22905 / CIP 110041 / 391-98 / NVH 391-98).